The following is a 126-amino-acid chain: L-alanine exporter AlaE (126 aa).

Residues 23–43 (FALVVYCFFTGMAIEILLSGM) form a helical membrane-spanning segment.

This sequence belongs to the AlaE exporter family.

The protein localises to the cell inner membrane. Functionally, exports L-alanine. The protein is L-alanine exporter AlaE of Sodalis glossinidius (strain morsitans).